The chain runs to 412 residues: Gamma-glutamyl phosphate reductase (412 aa).

The protein belongs to the gamma-glutamyl phosphate reductase family.

It is found in the cytoplasm. It carries out the reaction L-glutamate 5-semialdehyde + phosphate + NADP(+) = L-glutamyl 5-phosphate + NADPH + H(+). Its pathway is amino-acid biosynthesis; L-proline biosynthesis; L-glutamate 5-semialdehyde from L-glutamate: step 2/2. Catalyzes the NADPH-dependent reduction of L-glutamate 5-phosphate into L-glutamate 5-semialdehyde and phosphate. The product spontaneously undergoes cyclization to form 1-pyrroline-5-carboxylate. This chain is Gamma-glutamyl phosphate reductase, found in Streptococcus suis (strain 98HAH33).